We begin with the raw amino-acid sequence, 412 residues long: Protein png-1 (412 aa).

The Zn(2+) site is built by Cys-150, Cys-153, Cys-182, and Cys-185. Residues Ala-363–Pro-412 are disordered.

This sequence belongs to the transglutaminase-like superfamily. PNGase family.

The chain is Protein png-1 (un-7) from Neurospora crassa (strain ATCC 24698 / 74-OR23-1A / CBS 708.71 / DSM 1257 / FGSC 987).